The chain runs to 257 residues: Phycoerythrobilin:ferredoxin oxidoreductase (257 aa).

This sequence belongs to the HY2 family.

It catalyses the reaction (3Z)-phycoerythrobilin + oxidized 2[4Fe-4S]-[ferredoxin] = 15,16-dihydrobiliverdin + reduced 2[4Fe-4S]-[ferredoxin] + 2 H(+). Its function is as follows. Catalyzes the two-electron reduction of the C2 and C3(1) diene system of 15,16-dihydrobiliverdin. This Prochlorococcus marinus (strain MIT 9211) protein is Phycoerythrobilin:ferredoxin oxidoreductase.